Reading from the N-terminus, the 147-residue chain is Small ribosomal subunit protein bS6m (147 aa).

Belongs to the bacterial ribosomal protein bS6 family. Component of the mitochondrial ribosome small subunit (28S) which comprises a 12S rRNA and about 30 distinct proteins.

It localises to the mitochondrion. This is Small ribosomal subunit protein bS6m (mRpS6) from Drosophila melanogaster (Fruit fly).